The primary structure comprises 441 residues: Xaa-Pro dipeptidase (441 aa).

Residues Asp-244, Asp-255, His-336, Glu-381, and Glu-420 each coordinate Mn(2+).

The protein belongs to the peptidase M24B family. Bacterial-type prolidase subfamily. Requires Mn(2+) as cofactor.

The catalysed reaction is Xaa-L-Pro dipeptide + H2O = an L-alpha-amino acid + L-proline. Its function is as follows. Splits dipeptides with a prolyl residue in the C-terminal position. The chain is Xaa-Pro dipeptidase from Xanthomonas axonopodis pv. citri (strain 306).